Consider the following 340-residue polypeptide: Deubiquitinase SseL (340 aa).

Histidine 223 is an active-site residue. Residue cysteine 285 is the Nucleophile of the active site.

It belongs to the peptidase C79 family.

It localises to the secreted. Its subcellular location is the host cytoplasm. In terms of biological role, effector proteins function to alter host cell physiology and promote bacterial survival in host tissues. This protease targets the host cell ubiquitin pathway by acting as a deubiquitinase in infected host cells. In Salmonella paratyphi B (strain ATCC BAA-1250 / SPB7), this protein is Deubiquitinase SseL (sseL).